We begin with the raw amino-acid sequence, 327 residues long: MYQSLMTVRETQIAIKEVKTFFEDQLAKRLELFRVSAPLFVTKKSGLNDHLNGVERPIEFDMLHSGEELEIVHSLAKWKRFALHEYGYEAGEGLYTNMNAIRRDEELDATHSIYVDQWDWEKIVQKEWRTIDYLQKTVQTIYGIFKELEGHLFEKYPFLGKYLPEEIIFITSQELEDKYPELTPKDREHAIAKEHGAVFIIGIGDALRSGEKHDGRASDYDDWKLNGDILFWHPVLQASFELSSMGIRVDSKALDEQLTKTGEDFKREYDFHKGILEDVLPLTIGGGIGQSRMCMYFLRKAHIGEVQSSVWPDDLREACKKENIHLF.

It belongs to the class-II aminoacyl-tRNA synthetase family. AsnA subfamily.

The protein resides in the cytoplasm. The enzyme catalyses L-aspartate + NH4(+) + ATP = L-asparagine + AMP + diphosphate + H(+). Its pathway is amino-acid biosynthesis; L-asparagine biosynthesis; L-asparagine from L-aspartate (ammonia route): step 1/1. The sequence is that of Aspartate--ammonia ligase from Bacillus mycoides (strain KBAB4) (Bacillus weihenstephanensis).